The following is a 170-amino-acid chain: uncharacterized protein (170 aa).

This is an uncharacterized protein from Ureaplasma parvum serovar 3 (strain ATCC 700970).